We begin with the raw amino-acid sequence, 575 residues long: uncharacterized protein (575 aa).

The protein localises to the cytoplasm. The protein resides in the cytoskeleton. It localises to the microtubule organizing center. It is found in the spindle pole body. This is an uncharacterized protein from Schizosaccharomyces pombe (strain 972 / ATCC 24843) (Fission yeast).